Reading from the N-terminus, the 237-residue chain is Phosphoribosylaminoimidazole-succinocarboxamide synthase (237 aa).

This sequence belongs to the SAICAR synthetase family.

It catalyses the reaction 5-amino-1-(5-phospho-D-ribosyl)imidazole-4-carboxylate + L-aspartate + ATP = (2S)-2-[5-amino-1-(5-phospho-beta-D-ribosyl)imidazole-4-carboxamido]succinate + ADP + phosphate + 2 H(+). The protein operates within purine metabolism; IMP biosynthesis via de novo pathway; 5-amino-1-(5-phospho-D-ribosyl)imidazole-4-carboxamide from 5-amino-1-(5-phospho-D-ribosyl)imidazole-4-carboxylate: step 1/2. This Marinobacter nauticus (strain ATCC 700491 / DSM 11845 / VT8) (Marinobacter aquaeolei) protein is Phosphoribosylaminoimidazole-succinocarboxamide synthase.